The following is a 102-amino-acid chain: Large ribosomal subunit protein bL21 (102 aa).

Belongs to the bacterial ribosomal protein bL21 family. As to quaternary structure, part of the 50S ribosomal subunit. Contacts protein L20.

This protein binds to 23S rRNA in the presence of protein L20. The sequence is that of Large ribosomal subunit protein bL21 from Campylobacter jejuni subsp. doylei (strain ATCC BAA-1458 / RM4099 / 269.97).